The sequence spans 638 residues: Chaperone protein DnaK (638 aa).

A Phosphothreonine; by autocatalysis modification is found at Thr-200. The interval 598–621 is disordered; sequence SLHMAATAEQQSGSTGAGAGASAK.

This sequence belongs to the heat shock protein 70 family.

Acts as a chaperone. This is Chaperone protein DnaK from Xylella fastidiosa (strain M23).